The following is a 150-amino-acid chain: MIIEEIQGNIANLSQDEKQKHVEKVYLENSDLVKRIQRVKTDHGNEIGIRLKQPIDLQYGDILYQDDTNMIIVDVNSEDLLVIKPRNLKEMGDIAHQLGNRHLPAQFTETEMLIQYDYLVEDLLKELGIPYSHEDRKVNQAFRHIGHSHD.

The protein belongs to the UreE family.

It is found in the cytoplasm. Functionally, involved in urease metallocenter assembly. Binds nickel. Probably functions as a nickel donor during metallocenter assembly. This Staphylococcus epidermidis (strain ATCC 35984 / DSM 28319 / BCRC 17069 / CCUG 31568 / BM 3577 / RP62A) protein is Urease accessory protein UreE.